Consider the following 503-residue polypeptide: Probable Xaa-Pro aminopeptidase TSTA_094700 (503 aa).

Residues aspartate 277, aspartate 288, glutamate 428, and glutamate 467 each coordinate Mn(2+).

It belongs to the peptidase M24B family. Requires Mn(2+) as cofactor.

It carries out the reaction Release of any N-terminal amino acid, including proline, that is linked to proline, even from a dipeptide or tripeptide.. Its function is as follows. Catalyzes the removal of a penultimate prolyl residue from the N-termini of peptides. The sequence is that of Probable Xaa-Pro aminopeptidase TSTA_094700 from Talaromyces stipitatus (strain ATCC 10500 / CBS 375.48 / QM 6759 / NRRL 1006) (Penicillium stipitatum).